A 347-amino-acid polypeptide reads, in one-letter code: Heat-inducible transcription repressor HrcA (347 aa).

The protein belongs to the HrcA family.

In terms of biological role, negative regulator of class I heat shock genes (grpE-dnaK-dnaJ and groELS operons). Prevents heat-shock induction of these operons. This is Heat-inducible transcription repressor HrcA from Mycobacterium sp. (strain JLS).